The primary structure comprises 776 residues: Lon protease (776 aa).

The region spanning 12–209 is the Lon N-terminal domain; the sequence is LPIIALRGLW…LVYKFVIKEI (198 aa). 360–367 provides a ligand contact to ATP; it reads GPPGVGKT. The Lon proteolytic domain maps to 596–776; sequence EDTVGVVNGL…VKEILDEVLI (181 aa). Residues serine 683 and lysine 726 contribute to the active site.

Belongs to the peptidase S16 family. Homohexamer. Organized in a ring with a central cavity.

Its subcellular location is the cytoplasm. The enzyme catalyses Hydrolysis of proteins in presence of ATP.. Its function is as follows. ATP-dependent serine protease that mediates the selective degradation of mutant and abnormal proteins as well as certain short-lived regulatory proteins. Required for cellular homeostasis and for survival from DNA damage and developmental changes induced by stress. Degrades polypeptides processively to yield small peptide fragments that are 5 to 10 amino acids long. Binds to DNA in a double-stranded, site-specific manner. The chain is Lon protease from Finegoldia magna (strain ATCC 29328 / DSM 20472 / WAL 2508) (Peptostreptococcus magnus).